The chain runs to 336 residues: Glucokinase (336 aa).

Ala12–Thr17 lines the ATP pocket.

Belongs to the bacterial glucokinase family.

Its subcellular location is the cytoplasm. It catalyses the reaction D-glucose + ATP = D-glucose 6-phosphate + ADP + H(+). This is Glucokinase from Helicobacter pylori (strain ATCC 700392 / 26695) (Campylobacter pylori).